The primary structure comprises 375 residues: MPSGSGFHNIEEAGEKARKRDDWIAISNFHPGWFSVNMGTGITAILLQNLPYQFPGLHYIAVILFILNVIIFFLFLTISITRYCLWPDKFKAMLAHPAHSMLLGTFPMGFATIINCIVFICVPVWGEWASRFAWGLWWIDAAVSVAICYFVPFMLMTKHTSSLETMTAAWLLPIVAPVVAAASGGVVADSLQNDTHALITILVCYVMWGSAVPLAMVILVIYFQRLAIHKLVPRAAIVSALLPIGPLGQGGFGLMQLGVVAKRVFPRLDFLAPIAGDIFYVMGAFIAMIMWGFGLIWLWFALASFTRGKFYFNIGWWAFTFPLGVFTTATTQMGKEFNSPFFDILGTFFSIVVTCMWVLVFALTVYKSCTKELFR.

The Cytoplasmic portion of the chain corresponds to 1 to 25 (MPSGSGFHNIEEAGEKARKRDDWIA). The helical transmembrane segment at 26–46 (ISNFHPGWFSVNMGTGITAIL) threads the bilayer. The Extracellular portion of the chain corresponds to 47–59 (LQNLPYQFPGLHY). A helical transmembrane segment spans residues 60-80 (IAVILFILNVIIFFLFLTISI). The Cytoplasmic portion of the chain corresponds to 81–101 (TRYCLWPDKFKAMLAHPAHSM). The helical transmembrane segment at 102-122 (LLGTFPMGFATIINCIVFICV) threads the bilayer. Residues 123–135 (PVWGEWASRFAWG) are Extracellular-facing. Residues 136 to 156 (LWWIDAAVSVAICYFVPFMLM) traverse the membrane as a helical segment. Over 157 to 167 (TKHTSSLETMT) the chain is Cytoplasmic. Residues 168 to 188 (AAWLLPIVAPVVAAASGGVVA) traverse the membrane as a helical segment. The Extracellular segment spans residues 189–200 (DSLQNDTHALIT). The N-linked (GlcNAc...) asparagine glycan is linked to asparagine 193. Residues 201-221 (ILVCYVMWGSAVPLAMVILVI) traverse the membrane as a helical segment. At 222 to 234 (YFQRLAIHKLVPR) the chain is on the cytoplasmic side. The chain crosses the membrane as a helical span at residues 235–255 (AAIVSALLPIGPLGQGGFGLM). The Extracellular segment spans residues 256 to 277 (QLGVVAKRVFPRLDFLAPIAGD). The helical transmembrane segment at 278–298 (IFYVMGAFIAMIMWGFGLIWL) threads the bilayer. Residues 299-309 (WFALASFTRGK) lie on the Cytoplasmic side of the membrane. Residues 310–330 (FYFNIGWWAFTFPLGVFTTAT) traverse the membrane as a helical segment. At 331–343 (TQMGKEFNSPFFD) the chain is on the extracellular side. A helical membrane pass occupies residues 344–364 (ILGTFFSIVVTCMWVLVFALT). At 365–375 (VYKSCTKELFR) the chain is on the cytoplasmic side.

This sequence belongs to the tellurite-resistance/dicarboxylate transporter (TDT) family.

It is found in the cell membrane. Sulphite efflux pump required for the secretion of sulphite as a reducing agent. In the presence of sulphite, cystine in keratin is directly cleaved to cysteine and S-sulphocysteine, and thereby, reduced proteins become accessible to hydrolysis by a variety of secreted endo- and exoproteases. Excretion of sulphite mediated by an efflux pump also represents a detoxification pathway for dermatophytes during infection of the epidermal stratum corneum, hair and nails, which are rich in cysteine. The chain is Sulfite efflux pump SSU1 from Arthroderma benhamiae (strain ATCC MYA-4681 / CBS 112371) (Trichophyton mentagrophytes).